The primary structure comprises 693 residues: Sister chromatid cohesion 1 protein 3 (693 aa).

4 disordered regions span residues 167 to 250 (IPMD…PGTV), 262 to 361 (DLSP…KNFD), 460 to 511 (PVSP…TFDN), and 545 to 573 (TQSGNWETESYRTEPSTSTVPEDLPGQRN). Composition is skewed to basic and acidic residues over residues 178–201 (VSRHTGEIDVETAHETGPDNEPRD) and 232–243 (TEERIPNSERND). Residues 264–277 (SPTSHPSFAAQQQD) are compositionally biased toward polar residues. The span at 278–295 (VRVERTESLDETLNEKEP) shows a compositional bias: basic and acidic residues. The span at 316 to 325 (RSGSPGSAAG) shows a compositional bias: low complexity. Polar residues-rich tracts occupy residues 465–483 (PDSTNPDSTVQLSPAQQTE) and 545–564 (TQSGNWETESYRTEPSTSTV).

The protein belongs to the rad21 family. As to quaternary structure, component of the cohesin complex. In terms of tissue distribution, low expression in shoots, buds, siliques, leaves and roots. Found in, but not limited to, actively dividing cells: in procambium, protoderm and ground meristem in roots, and in shoot and floral meristems.

The protein resides in the nucleus. Functionally, may be involved in sister chromatid cohesion during mitosis. In Arabidopsis thaliana (Mouse-ear cress), this protein is Sister chromatid cohesion 1 protein 3 (SYN3).